Reading from the N-terminus, the 427-residue chain is Serine--tRNA ligase (427 aa).

228–230 (TSE) contributes to the L-serine binding site. 259-261 (RSE) serves as a coordination point for ATP. L-serine is bound at residue Glu282. 346 to 349 (EISS) provides a ligand contact to ATP. Ser384 provides a ligand contact to L-serine.

This sequence belongs to the class-II aminoacyl-tRNA synthetase family. Type-1 seryl-tRNA synthetase subfamily. As to quaternary structure, homodimer. The tRNA molecule binds across the dimer.

The protein localises to the cytoplasm. It carries out the reaction tRNA(Ser) + L-serine + ATP = L-seryl-tRNA(Ser) + AMP + diphosphate + H(+). It catalyses the reaction tRNA(Sec) + L-serine + ATP = L-seryl-tRNA(Sec) + AMP + diphosphate + H(+). The protein operates within aminoacyl-tRNA biosynthesis; selenocysteinyl-tRNA(Sec) biosynthesis; L-seryl-tRNA(Sec) from L-serine and tRNA(Sec): step 1/1. Functionally, catalyzes the attachment of serine to tRNA(Ser). Is also able to aminoacylate tRNA(Sec) with serine, to form the misacylated tRNA L-seryl-tRNA(Sec), which will be further converted into selenocysteinyl-tRNA(Sec). This Ehrlichia ruminantium (strain Welgevonden) protein is Serine--tRNA ligase.